The sequence spans 98 residues: MATTKYEVTYIIKPDIDEDNKKALVENYDKVIADNGGTMVESKDWGKRRFAYEIDKYREGTYHIMTFTADNADAVNEFSRLSKIDNAILRSMTVKLDK.

It belongs to the bacterial ribosomal protein bS6 family.

Binds together with bS18 to 16S ribosomal RNA. The protein is Small ribosomal subunit protein bS6 of Lactobacillus acidophilus (strain ATCC 700396 / NCK56 / N2 / NCFM).